A 207-amino-acid chain; its full sequence is N-(5'-phosphoribosyl)anthranilate isomerase (207 aa).

This sequence belongs to the TrpF family.

It catalyses the reaction N-(5-phospho-beta-D-ribosyl)anthranilate = 1-(2-carboxyphenylamino)-1-deoxy-D-ribulose 5-phosphate. The protein operates within amino-acid biosynthesis; L-tryptophan biosynthesis; L-tryptophan from chorismate: step 3/5. This Legionella pneumophila (strain Corby) protein is N-(5'-phosphoribosyl)anthranilate isomerase.